Here is a 282-residue protein sequence, read N- to C-terminus: Trans,polycis-polyprenyl diphosphate synthase ((2Z,6E)-farnesyl diphosphate specific) (282 aa).

Residues 1–30 (MSPKTVFSTDTHREPIPPQPHPSGARPPQL) form a disordered region. Residue Asp44 is part of the active site. Mg(2+) is bound at residue Asp44. Residues 45-48 (GNGR), Trp49, Arg57, His61, and 89-91 (STE) each bind substrate. Asn92 (proton acceptor) is an active-site residue. Substrate contacts are provided by residues Trp93, Arg95, Arg212, and 218 to 220 (RLS). Glu231 provides a ligand contact to Mg(2+). A disordered region spans residues 262 to 282 (GGAEPNPVGPPQSAAGAQGQD).

Belongs to the UPP synthase family. Homodimer. Requires Mg(2+) as cofactor.

It carries out the reaction (2Z,6E)-farnesyl diphosphate + 10 isopentenyl diphosphate = di-trans,deca-cis-tridecaprenyl diphosphate + 10 diphosphate. The catalysed reaction is (2Z,6E)-farnesyl diphosphate + 11 isopentenyl diphosphate = di-trans,undeca-cis-tetradecaprenyl diphosphate + 11 diphosphate. The enzyme catalyses (2Z,6E)-farnesyl diphosphate + 9 isopentenyl diphosphate = di-trans,nona-cis-dodecaprenyl diphosphate + 9 diphosphate. In terms of biological role, catalyzes the synthesis of Z,E-mixed prenyl diphosphates by a condensation of isopentenyl diphosphate to an allylic diphosphate. It shows a large substrate specificity accepting dimethylallyl diphosphate (DMAPP), GPP, E,Efarnesyl diphosphate (FPP), E,E,E-geranylgeranyl diphosphate (GGPP), neryl diphosphate (Z-GPP), and (2Z,6E)-farnesyl diphosphate (Z,E-FPP) as allylic substrates. The enzyme exhibits the highest activity when Z,E-FPP is employed as an allylic substrate. The major product is dodecaprenyl diphosphate (C60) under every allylic substrate conditions, but the enzyme is also able to synthesize even C70 prenyl diphosphate as the maximum chain-length product. The chain is Trans,polycis-polyprenyl diphosphate synthase ((2Z,6E)-farnesyl diphosphate specific) from Thermobifida fusca (strain YX).